Reading from the N-terminus, the 128-residue chain is RutC family protein BU371 (128 aa).

It belongs to the RutC family.

The chain is RutC family protein BU371 from Buchnera aphidicola subsp. Acyrthosiphon pisum (strain APS) (Acyrthosiphon pisum symbiotic bacterium).